The sequence spans 218 residues: Orotate phosphoribosyltransferase (218 aa).

Lys26 is a binding site for 5-phospho-alpha-D-ribose 1-diphosphate. Position 34-35 (34-35) interacts with orotate; the sequence is FF. 5-phospho-alpha-D-ribose 1-diphosphate contacts are provided by residues 72–73, Arg99, Lys100, Lys103, His105, and 124–132; these read YK and DDVITAGTA. Orotate contacts are provided by Thr128 and Arg156.

It belongs to the purine/pyrimidine phosphoribosyltransferase family. PyrE subfamily. Homodimer. Mg(2+) serves as cofactor.

The enzyme catalyses orotidine 5'-phosphate + diphosphate = orotate + 5-phospho-alpha-D-ribose 1-diphosphate. The protein operates within pyrimidine metabolism; UMP biosynthesis via de novo pathway; UMP from orotate: step 1/2. Functionally, catalyzes the transfer of a ribosyl phosphate group from 5-phosphoribose 1-diphosphate to orotate, leading to the formation of orotidine monophosphate (OMP). The polypeptide is Orotate phosphoribosyltransferase (Hamiltonella defensa subsp. Acyrthosiphon pisum (strain 5AT)).